A 155-amino-acid polypeptide reads, in one-letter code: Ribosomal RNA large subunit methyltransferase H (155 aa).

S-adenosyl-L-methionine contacts are provided by residues Leu73, Gly104, and Leu123 to Leu128.

This sequence belongs to the RNA methyltransferase RlmH family. Homodimer.

The protein resides in the cytoplasm. The enzyme catalyses pseudouridine(1915) in 23S rRNA + S-adenosyl-L-methionine = N(3)-methylpseudouridine(1915) in 23S rRNA + S-adenosyl-L-homocysteine + H(+). Functionally, specifically methylates the pseudouridine at position 1915 (m3Psi1915) in 23S rRNA. This chain is Ribosomal RNA large subunit methyltransferase H, found in Chromohalobacter salexigens (strain ATCC BAA-138 / DSM 3043 / CIP 106854 / NCIMB 13768 / 1H11).